Here is a 160-residue protein sequence, read N- to C-terminus: MTVTDAPSANPTRRSRTIARVAAVQALFQCEQSGDTAETVISQFIRHRRISSTASFDDGHIPDADLKLFQEIVLGVTRRQDDIDAKLSDVLPEQWPLPRLDPVLRALLRAAVFEIGTDTPDRIIINEYLDVAHGFFSGDEPKMVNGILDTLSRRANDGNV.

This sequence belongs to the NusB family.

Its function is as follows. Involved in transcription antitermination. Required for transcription of ribosomal RNA (rRNA) genes. Binds specifically to the boxA antiterminator sequence of the ribosomal RNA (rrn) operons. The chain is Transcription antitermination protein NusB from Gluconobacter oxydans (strain 621H) (Gluconobacter suboxydans).